A 379-amino-acid polypeptide reads, in one-letter code: Succinate--CoA ligase [ADP-forming] subunit beta (379 aa).

The 228-residue stretch at 9-236 (KEIARKYGIE…GRDATPYEKV (228 aa)) folds into the ATP-grasp domain. ATP contacts are provided by residues Lys-46, 53–55 (GRG), Glu-92, Val-95, and Glu-100. Residues Asn-192 and Asp-206 each coordinate Mg(2+). Substrate-binding positions include Asn-256 and 313–315 (GIT).

Belongs to the succinate/malate CoA ligase beta subunit family. As to quaternary structure, heterotetramer of two alpha and two beta subunits. Requires Mg(2+) as cofactor.

It carries out the reaction succinate + ATP + CoA = succinyl-CoA + ADP + phosphate. The enzyme catalyses GTP + succinate + CoA = succinyl-CoA + GDP + phosphate. It participates in carbohydrate metabolism; tricarboxylic acid cycle; succinate from succinyl-CoA (ligase route): step 1/1. In terms of biological role, succinyl-CoA synthetase functions in the citric acid cycle (TCA), coupling the hydrolysis of succinyl-CoA to the synthesis of either ATP or GTP and thus represents the only step of substrate-level phosphorylation in the TCA. The beta subunit provides nucleotide specificity of the enzyme and binds the substrate succinate, while the binding sites for coenzyme A and phosphate are found in the alpha subunit. This is Succinate--CoA ligase [ADP-forming] subunit beta from Desulfurococcus amylolyticus (strain DSM 18924 / JCM 16383 / VKM B-2413 / 1221n) (Desulfurococcus kamchatkensis).